A 420-amino-acid chain; its full sequence is Hemocyanin 2-c chain (420 aa).

Positions 1-12 (DFGHSKKIRKNV) are enriched in basic residues. The interval 1-20 (DFGHSKKIRKNVHSLTAEEQ) is disordered. His-46 provides a ligand contact to Cu cation. Cys-52 and Cys-63 are disulfide-bonded. Residues His-66, His-73, His-185, His-189, and His-216 each coordinate Cu cation. Intrachain disulfides connect Cys-175–Cys-242 and Cys-335–Cys-342.

Post-translationally, O-glycosylated. Hemolymph.

It localises to the secreted. Its subcellular location is the extracellular space. Hemocyanins are copper-containing oxygen carriers occurring freely dissolved in the hemolymph of many mollusks and arthropods. This is Hemocyanin 2-c chain from Megathura crenulata (Giant keyhole limpet).